We begin with the raw amino-acid sequence, 290 residues long: Porphobilinogen deaminase (290 aa).

C237 carries the S-(dipyrrolylmethanemethyl)cysteine modification.

This sequence belongs to the HMBS family. Monomer. Dipyrromethane serves as cofactor.

The catalysed reaction is 4 porphobilinogen + H2O = hydroxymethylbilane + 4 NH4(+). The protein operates within porphyrin-containing compound metabolism; protoporphyrin-IX biosynthesis; coproporphyrinogen-III from 5-aminolevulinate: step 2/4. Functionally, tetrapolymerization of the monopyrrole PBG into the hydroxymethylbilane pre-uroporphyrinogen in several discrete steps. This is Porphobilinogen deaminase from Clostridium botulinum (strain Langeland / NCTC 10281 / Type F).